A 623-amino-acid chain; its full sequence is Transketolase (623 aa).

Met-1 bears the N-acetylmethionine mark. The residue at position 3 (Ser-3) is a Phosphoserine. N6-acetyllysine occurs at positions 6 and 11. A substrate-binding site is contributed by His-37. Thiamine diphosphate is bound by residues Ser-40 and His-77. Ser-104 carries the post-translational modification Phosphoserine. Thiamine diphosphate is bound at residue 123 to 125 (GSL). Lys-144 carries the N6-acetyllysine modification. Asp-155 is a binding site for Mg(2+). Thiamine diphosphate contacts are provided by Gly-156 and Asn-185. Residues Asn-185 and Leu-187 each contribute to the Mg(2+) site. An N6-acetyllysine mark is found at Lys-204, Lys-232, and Lys-241. Positions 244 and 258 each coordinate thiamine diphosphate. His-258 provides a ligand contact to substrate. Position 260 is an N6-acetyllysine (Lys-260). Residue Tyr-275 is modified to Phosphotyrosine. Thr-287 is modified (phosphothreonine). The residue at position 295 (Ser-295) is a Phosphoserine. Residues Arg-318 and Ser-345 each coordinate substrate. Ser-345 is modified (phosphoserine). Residue Lys-352 forms a Glycyl lysine isopeptide (Lys-Gly) (interchain with G-Cter in SUMO2) linkage. Residue Glu-366 is the Proton donor of the active site. Phe-392 is a binding site for thiamine diphosphate. Substrate contacts are provided by His-416 and Asp-424. Gln-428 is a thiamine diphosphate binding site. Arg-474 contacts substrate. N6-acetyllysine occurs at positions 538 and 603.

This sequence belongs to the transketolase family. In terms of assembly, homodimer. It depends on Mg(2+) as a cofactor. Requires Ca(2+) as cofactor. Mn(2+) is required as a cofactor. The cofactor is Co(2+). Thiamine diphosphate serves as cofactor.

It catalyses the reaction D-sedoheptulose 7-phosphate + D-glyceraldehyde 3-phosphate = aldehydo-D-ribose 5-phosphate + D-xylulose 5-phosphate. In terms of biological role, catalyzes the transfer of a two-carbon ketol group from a ketose donor to an aldose acceptor, via a covalent intermediate with the cofactor thiamine pyrophosphate. The protein is Transketolase (TKT) of Homo sapiens (Human).